The sequence spans 677 residues: MAAHHRQNTAGRRKVQVSYVIRDEVEKYNRNGVNALQLDPALNRLFTAGRDSIIRIWSVNQHKQDPYIASMEHHTDWVNDIVLCCNGKTLISASSDTTVKVWNAHKGFCMSTLRTHKDYVKALAYAKDKELVASAGLDRQIFLWDVNTLTALTASNNTVTTSSLSGNKDSIYSLAMNQLGTIIVSGSTEKVLRVWDPRTCAKLMKLKGHTDNVKALLLNRDGTQCLSGSSDGTIRLWSLGQQRCIATYRVHDEGVWALQVNDAFTHVYSGGRDRKIYCTDLRNPDIRVLICEEKAPVLKMELDRSADPPPAIWVATTKSTVNKWILKGIHNFRASGDYDNDCTNPITPLCTQPDQVIKGGASIIQCHILNDKRHILTKDTNNNVAYWDVLKACKVEDLGKVDFEDEIKKRFKMVYVPNWFSVDLKTGMLTITLDESDCFAAWVSAKDAGFSSPDGSDPKLNLGGLLLQALLEYWPRTHVNPMDEEENEVNHVNGEQENRVQKGNGYFQVPPHTPVIFGEAGGRTLFRLLCRDSGGETESMLLNETVPQWVIDITVDKNMPKFNKIPFYLQPHASSGAKTLKKDRLSASDMLQVRKVMEHVYEKIINLDNESQTTSSSNNEKPGEQEKEEDIAVLAEEKIELLCQDQVLDPNMDLRTVKHFIWKSGGDLTLHYRQKST.

Residue Tyr28 is modified to Phosphotyrosine. WD repeat units follow at residues 28 to 67 (YNRN…QDPY), 73 to 112 (HHTD…CMST), 115 to 154 (THKD…ALTA), 166 to 205 (GNKD…KLMK), 208 to 247 (GHTD…CIAT), 250 to 289 (VHDE…IRVL), 292 to 334 (EEKA…NFRA), and 358 to 452 (KGGA…GFSS). Lys214 carries the post-translational modification N6-acetyllysine. Lys578 bears the N6-acetyllysine mark. The tract at residues 607-628 (LDNESQTTSSSNNEKPGEQEKE) is disordered. Over residues 609 to 620 (NESQTTSSSNNE) the composition is skewed to low complexity. Thr613 bears the Phosphothreonine mark.

It belongs to the WD repeat WDR48 family. In terms of assembly, interacts with USP46. Interacts with USP1. Interacts with USP12. Component of the USP12-WDR20-WDR48 deubiquitinating complex. Component of the USP12-DMWD-WDR48 deubiquitinating complex. Interacts with PHLPP1. Interacts with RAD51AP1; the interaction is direct and promotes formation of a trimeric complex with RAD51 via RAD51AP1. Interacts with ATAD5; the interaction regulates USP1-mediated PCNA deubiquitination. Interacts with RAD51; the interaction is enhanced under replication stress. Interacts with ITCH; the interaction is more efficient when both USP12 and WDR48/UAF1 are involved and may facilitate recruitment of the USP12 deubiquitinating complex to Notch.

Its subcellular location is the nucleus. The protein localises to the cytoplasm. It is found in the lysosome. It localises to the late endosome. Regulator of deubiquitinating complexes, which acts as a strong activator of USP1, USP12 and USP46. Enhances the USP1-mediated deubiquitination of FANCD2; USP1 being almost inactive by itself. Activates deubiquitination by increasing the catalytic turnover without increasing the affinity of deubiquitinating enzymes for the substrate. Also activates deubiquitinating activity of complexes containing USP12. Docks at the distal end of the USP12 fingers domain and induces a cascade of structural changes leading to the activation of the enzyme. Together with RAD51AP1, promotes DNA repair by stimulating RAD51-mediated homologous recombination. Binds single-stranded DNA (ssDNA) and double-stranded DNA (dsDNA). DNA-binding is required both for USP1-mediated deubiquitination of FANCD2 and stimulation of RAD51-mediated homologous recombination: both WDR48/UAF1 and RAD51AP1 have coordinated role in DNA-binding during these processes. Together with ATAD5 and by regulating USP1 activity, has a role in PCNA-mediated translesion synthesis (TLS) by deubiquitinating monoubiquitinated PCNA. Together with ATAD5, has a role in recruiting RAD51 to stalled forks during replication stress. This is WD repeat-containing protein 48 (WDR48) from Pongo abelii (Sumatran orangutan).